Here is a 144-residue protein sequence, read N- to C-terminus: Gas vesicle protein A1 (144 aa).

The interval 72–144 (EAGPRKDPGL…APSRRKEEQE (73 aa)) is disordered. Over residues 113–127 (KQARDDGGSERETSS) the composition is skewed to basic and acidic residues.

This sequence belongs to the gas vesicle GvpA family. As to quaternary structure, the gas vesicle shell is 2 nm thick and consists of a single layer of this protein. It forms helical ribs nearly perpendicular to the long axis of the vesicle.

The protein resides in the gas vesicle shell. Gas vesicles are hollow, gas filled proteinaceous nanostructures found in some microorganisms. During planktonic growth they allow positioning of the organism at a favorable depth for light or nutrient acquisition. GvpA forms the protein shell. It is not clear what function GVs perform in soil bacteria. In Streptomyces coelicolor (strain ATCC BAA-471 / A3(2) / M145), this protein is Gas vesicle protein A1.